Consider the following 441-residue polypeptide: ATP-dependent protease ATPase subunit HslU (441 aa).

Residues Ile-18, 60–65 (GVGKTE), Asp-254, Glu-319, and Arg-391 contribute to the ATP site.

Belongs to the ClpX chaperone family. HslU subfamily. In terms of assembly, a double ring-shaped homohexamer of HslV is capped on each side by a ring-shaped HslU homohexamer. The assembly of the HslU/HslV complex is dependent on binding of ATP.

It localises to the cytoplasm. ATPase subunit of a proteasome-like degradation complex; this subunit has chaperone activity. The binding of ATP and its subsequent hydrolysis by HslU are essential for unfolding of protein substrates subsequently hydrolyzed by HslV. HslU recognizes the N-terminal part of its protein substrates and unfolds these before they are guided to HslV for hydrolysis. The sequence is that of ATP-dependent protease ATPase subunit HslU from Shewanella pealeana (strain ATCC 700345 / ANG-SQ1).